A 183-amino-acid chain; its full sequence is Acireductone dioxygenase (183 aa).

H99, H101, E105, and H144 together coordinate Fe(2+). The Ni(2+) site is built by H99, H101, E105, and H144.

The protein belongs to the acireductone dioxygenase (ARD) family. As to quaternary structure, monomer. Requires Fe(2+) as cofactor. It depends on Ni(2+) as a cofactor.

It catalyses the reaction 1,2-dihydroxy-5-(methylsulfanyl)pent-1-en-3-one + O2 = 3-(methylsulfanyl)propanoate + CO + formate + 2 H(+). The enzyme catalyses 1,2-dihydroxy-5-(methylsulfanyl)pent-1-en-3-one + O2 = 4-methylsulfanyl-2-oxobutanoate + formate + 2 H(+). Its pathway is amino-acid biosynthesis; L-methionine biosynthesis via salvage pathway; L-methionine from S-methyl-5-thio-alpha-D-ribose 1-phosphate: step 5/6. In terms of biological role, catalyzes 2 different reactions between oxygen and the acireductone 1,2-dihydroxy-3-keto-5-methylthiopentene (DHK-MTPene) depending upon the metal bound in the active site. Fe-containing acireductone dioxygenase (Fe-ARD) produces formate and 2-keto-4-methylthiobutyrate (KMTB), the alpha-ketoacid precursor of methionine in the methionine recycle pathway. Ni-containing acireductone dioxygenase (Ni-ARD) produces methylthiopropionate, carbon monoxide and formate, and does not lie on the methionine recycle pathway. This Microcystis aeruginosa (strain NIES-843 / IAM M-2473) protein is Acireductone dioxygenase.